Consider the following 224-residue polypeptide: MPLCGSSSSSKHPIERKIVILGDGACGKTSLLNVFTRGYFPKVYEPTVFENYIHDIFVDNQHITLSLWDTAGQEEFDRLRSLSYSDTHTIMLCFSVDSRDSLENVKNKWVSEIADHCEGVKLVLVALKCDLRSSDEYGNESAITPGSIQNQKYNGGGGNGLIPYDEGLAMAKQIGALRYLECSAKMNRGVNEAFTEAARCALTATPKGARDSAPEAESSSCTIM.

22-29 (GDGACGKT) lines the GTP pocket. The Effector region motif lies at 44 to 52 (YEPTVFENY). GTP-binding positions include 69–73 (DTAGQ) and 127–130 (LKCD). Residues 205 to 224 (TPKGARDSAPEAESSSCTIM) are disordered. At cysteine 221 the chain carries Cysteine methyl ester. A lipid anchor (S-geranylgeranyl cysteine) is attached at cysteine 221. Residues 222–224 (TIM) constitute a propeptide, removed in mature form.

It belongs to the small GTPase superfamily. Rho family.

It is found in the cell membrane. Functionally, involved in the regulation of actin polarization. Rho proteins are required for distinct steps during polarized hyphal growth of A.gossypii. The chain is GTP-binding protein RHO3 (RHO3) from Eremothecium gossypii (strain ATCC 10895 / CBS 109.51 / FGSC 9923 / NRRL Y-1056) (Yeast).